Reading from the N-terminus, the 360-residue chain is MLLFLADLLAHFQSAFNVFNYLTLRVILGTLTALMLCLWLGPQVIRRLVERQIGQAVRDDGPQSHLSKAGTPTMGGAMILIAIAVSTLLWGDLTNHYVWLVLAVTLGFGAIGWVDDYRKVVEKNPRGLPARWKYFWQSAIGLGAAVTLYLTAASPVEVSLIVPLFKDVVVPLGLFYIVLTYFVIVGSSNAVNLTDGLDGLAIMPTVLVAMGLAIFAYASGNTVFAQYLHIPLVPGAGELAVFCGTIAGAGLGFLWFNTYPAQVFMGDVGALALGAALGVVAVIVRQEIVLFIMGGVFVMETVSVMLQVGSYKLTGRRIFRMAPLHHHFELKGWPEPRVIVRFWIITVVLVLLGLATLKIR.

The next 10 helical transmembrane spans lie at 21–41 (YLTLRVILGTLTALMLCLWLG), 73–93 (TMGGAMILIAIAVSTLLWGDL), 94–114 (TNHYVWLVLAVTLGFGAIGWV), 145–165 (AVTLYLTAASPVEVSLIVPLF), 168–188 (VVVPLGLFYIVLTYFVIVGSS), 199–219 (GLAIMPTVLVAMGLAIFAYAS), 236–256 (AGELAVFCGTIAGAGLGFLWF), 263–283 (VFMGDVGALALGAALGVVAVI), 288–308 (IVLFIMGGVFVMETVSVMLQV), and 339–359 (IVRFWIITVVLVLLGLATLKI).

It belongs to the glycosyltransferase 4 family. MraY subfamily. Mg(2+) is required as a cofactor.

Its subcellular location is the cell inner membrane. The catalysed reaction is UDP-N-acetyl-alpha-D-muramoyl-L-alanyl-gamma-D-glutamyl-meso-2,6-diaminopimeloyl-D-alanyl-D-alanine + di-trans,octa-cis-undecaprenyl phosphate = di-trans,octa-cis-undecaprenyl diphospho-N-acetyl-alpha-D-muramoyl-L-alanyl-D-glutamyl-meso-2,6-diaminopimeloyl-D-alanyl-D-alanine + UMP. The protein operates within cell wall biogenesis; peptidoglycan biosynthesis. Its function is as follows. Catalyzes the initial step of the lipid cycle reactions in the biosynthesis of the cell wall peptidoglycan: transfers peptidoglycan precursor phospho-MurNAc-pentapeptide from UDP-MurNAc-pentapeptide onto the lipid carrier undecaprenyl phosphate, yielding undecaprenyl-pyrophosphoryl-MurNAc-pentapeptide, known as lipid I. In Chromohalobacter salexigens (strain ATCC BAA-138 / DSM 3043 / CIP 106854 / NCIMB 13768 / 1H11), this protein is Phospho-N-acetylmuramoyl-pentapeptide-transferase.